An 880-amino-acid polypeptide reads, in one-letter code: Alanine--tRNA ligase (880 aa).

Positions 567, 571, 669, and 673 each coordinate Zn(2+).

The protein belongs to the class-II aminoacyl-tRNA synthetase family. Requires Zn(2+) as cofactor.

The protein localises to the cytoplasm. It catalyses the reaction tRNA(Ala) + L-alanine + ATP = L-alanyl-tRNA(Ala) + AMP + diphosphate. Functionally, catalyzes the attachment of alanine to tRNA(Ala) in a two-step reaction: alanine is first activated by ATP to form Ala-AMP and then transferred to the acceptor end of tRNA(Ala). Also edits incorrectly charged Ser-tRNA(Ala) and Gly-tRNA(Ala) via its editing domain. This Bacillus cereus (strain ZK / E33L) protein is Alanine--tRNA ligase.